The chain runs to 153 residues: 6,7-dimethyl-8-ribityllumazine synthase (153 aa).

5-amino-6-(D-ribitylamino)uracil is bound by residues Phe-22, 56–58 (AFE), and 80–82 (TVI). A (2S)-2-hydroxy-3-oxobutyl phosphate-binding site is contributed by 85–86 (ST). His-88 serves as the catalytic Proton donor. Phe-113 lines the 5-amino-6-(D-ribitylamino)uracil pocket. Arg-127 is a binding site for (2S)-2-hydroxy-3-oxobutyl phosphate.

The protein belongs to the DMRL synthase family. As to quaternary structure, forms an icosahedral capsid composed of 60 subunits, arranged as a dodecamer of pentamers.

The catalysed reaction is (2S)-2-hydroxy-3-oxobutyl phosphate + 5-amino-6-(D-ribitylamino)uracil = 6,7-dimethyl-8-(1-D-ribityl)lumazine + phosphate + 2 H2O + H(+). Its pathway is cofactor biosynthesis; riboflavin biosynthesis; riboflavin from 2-hydroxy-3-oxobutyl phosphate and 5-amino-6-(D-ribitylamino)uracil: step 1/2. Functionally, catalyzes the formation of 6,7-dimethyl-8-ribityllumazine by condensation of 5-amino-6-(D-ribitylamino)uracil with 3,4-dihydroxy-2-butanone 4-phosphate. This is the penultimate step in the biosynthesis of riboflavin. In Actinobacillus pleuropneumoniae serotype 7 (strain AP76), this protein is 6,7-dimethyl-8-ribityllumazine synthase.